Here is a 972-residue protein sequence, read N- to C-terminus: Isoleucine--tRNA ligase (972 aa).

The 'HIGH' region motif lies at P63–H73. Residue E603 coordinates L-isoleucyl-5'-AMP. Positions K644–S648 match the 'KMSKS' region motif. ATP is bound at residue K647.

The protein belongs to the class-I aminoacyl-tRNA synthetase family. IleS type 1 subfamily. Monomer.

The protein resides in the cytoplasm. It carries out the reaction tRNA(Ile) + L-isoleucine + ATP = L-isoleucyl-tRNA(Ile) + AMP + diphosphate. In terms of biological role, catalyzes the attachment of isoleucine to tRNA(Ile). As IleRS can inadvertently accommodate and process structurally similar amino acids such as valine, to avoid such errors it has two additional distinct tRNA(Ile)-dependent editing activities. One activity is designated as 'pretransfer' editing and involves the hydrolysis of activated Val-AMP. The other activity is designated 'posttransfer' editing and involves deacylation of mischarged Val-tRNA(Ile). This Brucella suis biovar 1 (strain 1330) protein is Isoleucine--tRNA ligase.